The following is a 334-amino-acid chain: Sterol 4-C-methyltransferase strm-1 (334 aa).

Belongs to the class I-like SAM-binding methyltransferase superfamily. Erg6/SMT family. As to expression, expressed in the pharynx and hypodermal syncytium.

It carries out the reaction 5alpha-cholest-7-en-3-one + S-adenosyl-L-methionine = 4alpha-methyl-5alpha-cholest-7-en-3-one + S-adenosyl-L-homocysteine + H(+). It functions in the pathway steroid hormone biosynthesis; dafachronic acid biosynthesis. Its function is as follows. Catalyzes the methyl transfer from S-adenosyl-methionine to the C-4 of the A-ring sterols such as lathosterone (5alpha-cholest-7-en-3-one) thereby rendering them unsuitable as ligand precursors. May irreversibly shunt sterols away from hormone dafachronic acid production. Dafachronic acids act as ligands and bind directly to the nuclear hormone receptor (NHR) daf-12 suppressing dauer formation and inducing reproductive growth. By reducing the biosynthesis of dafachronic acids, this methyltransferase can regulate dauer larva formation. This chain is Sterol 4-C-methyltransferase strm-1 (strm-1), found in Caenorhabditis elegans.